Reading from the N-terminus, the 404-residue chain is Ubiquitin-like modifier-activating enzyme 5 (404 aa).

5 residues coordinate ATP: glycine 83, aspartate 104, lysine 127, asparagine 150, and asparagine 184. Zn(2+) contacts are provided by cysteine 226 and cysteine 229. The active-site Glycyl thioester intermediate is the cysteine 250. Residues cysteine 303 and cysteine 308 each coordinate Zn(2+). The tract at residues 372–404 (APEKSSETSEETVSAATADETSLEDLMAQMKSM) is disordered. Residues 382-391 (ETVSAATADE) show a composition bias toward low complexity.

Belongs to the ubiquitin-activating E1 family. UBA5 subfamily. As to quaternary structure, interacts (via C-terminus) with Ufc1. Interacts with Ufm1.

It is found in the cytoplasm. The protein resides in the nucleus. It localises to the golgi apparatus. In terms of biological role, E1-like enzyme which activates UFM1. This Drosophila melanogaster (Fruit fly) protein is Ubiquitin-like modifier-activating enzyme 5.